Consider the following 204-residue polypeptide: Cytochrome c biogenesis ATP-binding export protein CcmA (204 aa).

Positions 3 to 204 constitute an ABC transporter domain; it reads LTVTDLAIAR…PLDDPDGDFL (202 aa). 35 to 42 contributes to the ATP binding site; it reads GPNGAGKT.

This sequence belongs to the ABC transporter superfamily. CcmA exporter (TC 3.A.1.107) family. As to quaternary structure, the complex is composed of two ATP-binding proteins (CcmA) and two transmembrane proteins (CcmB).

It is found in the cell membrane. The enzyme catalyses heme b(in) + ATP + H2O = heme b(out) + ADP + phosphate + H(+). Its function is as follows. Part of the ABC transporter complex CcmAB involved in the biogenesis of c-type cytochromes; once thought to export heme, this seems not to be the case, but its exact role is uncertain. Responsible for energy coupling to the transport system. In Ruegeria pomeroyi (strain ATCC 700808 / DSM 15171 / DSS-3) (Silicibacter pomeroyi), this protein is Cytochrome c biogenesis ATP-binding export protein CcmA.